A 403-amino-acid polypeptide reads, in one-letter code: ATP phosphoribosyltransferase regulatory subunit (403 aa).

It belongs to the class-II aminoacyl-tRNA synthetase family. HisZ subfamily. In terms of assembly, heteromultimer composed of HisG and HisZ subunits.

It localises to the cytoplasm. Its pathway is amino-acid biosynthesis; L-histidine biosynthesis; L-histidine from 5-phospho-alpha-D-ribose 1-diphosphate: step 1/9. Its function is as follows. Required for the first step of histidine biosynthesis. May allow the feedback regulation of ATP phosphoribosyltransferase activity by histidine. In Nostoc punctiforme (strain ATCC 29133 / PCC 73102), this protein is ATP phosphoribosyltransferase regulatory subunit.